The chain runs to 788 residues: Endonuclease MutS2 (788 aa).

Position 332–339 (Gly332–Thr339) interacts with ATP. Residues Val713–Lys788 form the Smr domain.

This sequence belongs to the DNA mismatch repair MutS family. MutS2 subfamily. In terms of assembly, homodimer. Binds to stalled ribosomes, contacting rRNA.

In terms of biological role, endonuclease that is involved in the suppression of homologous recombination and thus may have a key role in the control of bacterial genetic diversity. Its function is as follows. Acts as a ribosome collision sensor, splitting the ribosome into its 2 subunits. Detects stalled/collided 70S ribosomes which it binds and splits by an ATP-hydrolysis driven conformational change. Acts upstream of the ribosome quality control system (RQC), a ribosome-associated complex that mediates the extraction of incompletely synthesized nascent chains from stalled ribosomes and their subsequent degradation. Probably generates substrates for RQC. This Clostridium botulinum (strain Okra / Type B1) protein is Endonuclease MutS2.